The sequence spans 216 residues: NADH dehydrogenase [ubiquinone] iron-sulfur protein 7, mitochondrial (216 aa).

The transit peptide at 1–37 directs the protein to the mitochondrion; sequence MAALAALRLLHPILAVRSGVGAALQVRGVHSSMAADS. [4Fe-4S] cluster-binding residues include Cys91 and Cys92. Arg114 is modified (hydroxyarginine). The [4Fe-4S] cluster site is built by Cys156 and Cys186.

Belongs to the complex I 20 kDa subunit family. In terms of assembly, core subunit of respiratory chain NADH dehydrogenase (Complex I) which is composed of 45 different subunits. This is a component of the iron-sulfur (IP) fragment of the enzyme. Requires [4Fe-4S] cluster as cofactor. Hydroxylated ar Arg-114 by NDUFAF5 early in the pathway of assembly of complex I, before the formation of the juncture between peripheral and membrane arms.

It is found in the mitochondrion inner membrane. It catalyses the reaction a ubiquinone + NADH + 5 H(+)(in) = a ubiquinol + NAD(+) + 4 H(+)(out). Core subunit of the mitochondrial membrane respiratory chain NADH dehydrogenase (Complex I) which catalyzes electron transfer from NADH through the respiratory chain, using ubiquinone as an electron acceptor. Essential for the catalytic activity of complex I. This is NADH dehydrogenase [ubiquinone] iron-sulfur protein 7, mitochondrial (NDUFS7) from Bos taurus (Bovine).